Consider the following 126-residue polypeptide: Histone H2B type 3-B (126 aa).

Positions 1–12 (MPDPSKSAPAPK) are enriched in low complexity. The disordered stretch occupies residues 1–35 (MPDPSKSAPAPKKGSKKAVTKAQKKDGKKRKRGRK). At proline 2 the chain carries N-acetylproline. Lysine 6 bears the N6-(2-hydroxyisobutyryl)lysine; alternate mark. Lysine 6 is subject to N6-(beta-hydroxybutyryl)lysine; alternate. At lysine 6 the chain carries N6-acetyllysine; alternate. Lysine 6 is subject to N6-butyryllysine; alternate. Lysine 6 carries the post-translational modification N6-crotonyllysine; alternate. At lysine 6 the chain carries N6-lactoyllysine; alternate. A Glycyl lysine isopeptide (Lys-Gly) (interchain with G-Cter in SUMO2); alternate cross-link involves residue lysine 6. An ADP-ribosylserine modification is found at serine 7. Lysine 12 bears the N6-(beta-hydroxybutyryl)lysine; alternate mark. N6-acetyllysine; alternate is present on residues lysine 12 and lysine 13. 2 positions are modified to N6-crotonyllysine; alternate: lysine 12 and lysine 13. An N6-lactoyllysine; alternate modification is found at lysine 12. The residue at position 13 (lysine 13) is an N6-(2-hydroxyisobutyryl)lysine; alternate. The residue at position 15 (serine 15) is a Phosphoserine; by STK4/MST1. Lysine 16, lysine 17, lysine 21, and lysine 24 each carry N6-acetyllysine; alternate. N6-crotonyllysine; alternate is present on residues lysine 16, lysine 17, lysine 21, and lysine 24. An N6-lactoyllysine; alternate mark is found at lysine 16, lysine 17, lysine 21, and lysine 24. Lysine 17 and lysine 21 each carry N6-(beta-hydroxybutyryl)lysine; alternate. Residue lysine 17 is modified to N6-glutaryllysine; alternate. N6-(2-hydroxyisobutyryl)lysine; alternate occurs at positions 21 and 24. Lysine 21 is subject to N6-butyryllysine; alternate. Residue lysine 21 forms a Glycyl lysine isopeptide (Lys-Gly) (interchain with G-Cter in SUMO2); alternate linkage. Lysine 25 is subject to N6-(2-hydroxyisobutyryl)lysine. At lysine 35 the chain carries N6-(2-hydroxyisobutyryl)lysine; alternate. Lysine 35 bears the N6-(beta-hydroxybutyryl)lysine; alternate mark. Lysine 35 is subject to N6-crotonyllysine; alternate. An N6-glutaryllysine; alternate modification is found at lysine 35. An N6-succinyllysine; alternate modification is found at lysine 35. A Glycyl lysine isopeptide (Lys-Gly) (interchain with G-Cter in ubiquitin); alternate cross-link involves residue lysine 35. Glutamate 36 bears the PolyADP-ribosyl glutamic acid mark. Serine 37 is modified (phosphoserine; by AMPK). Lysine 44, lysine 47, and lysine 58 each carry N6-(2-hydroxyisobutyryl)lysine; alternate. N6-lactoyllysine; alternate is present on lysine 44. Residues lysine 44 and lysine 47 each carry the N6-glutaryllysine; alternate modification. Position 47 is an N6-methyllysine; alternate (lysine 47). An N6,N6-dimethyllysine; alternate modification is found at lysine 58. Dimethylated arginine is present on arginine 80. Lysine 86 is subject to N6-(2-hydroxyisobutyryl)lysine; alternate. Lysine 86 is subject to N6-(beta-hydroxybutyryl)lysine; alternate. Lysine 86 carries the post-translational modification N6-acetyllysine; alternate. Residue lysine 86 is modified to N6-lactoyllysine; alternate. Lysine 86 carries the N6,N6,N6-trimethyllysine; alternate modification. Omega-N-methylarginine is present on residues arginine 87 and arginine 93. N6-(2-hydroxyisobutyryl)lysine; alternate is present on lysine 109. Position 109 is an N6-lactoyllysine; alternate (lysine 109). Lysine 109 carries the post-translational modification N6-glutaryllysine; alternate. An N6-methyllysine; alternate modification is found at lysine 109. Serine 113 carries an O-linked (GlcNAc) serine glycan. At threonine 116 the chain carries Phosphothreonine. Lysine 117 and lysine 121 each carry N6-(2-hydroxyisobutyryl)lysine; alternate. 2 positions are modified to N6-(beta-hydroxybutyryl)lysine; alternate: lysine 117 and lysine 121. An N6-lactoyllysine; alternate mark is found at lysine 117 and lysine 121. Residues lysine 117 and lysine 121 each carry the N6-glutaryllysine; alternate modification. Lysine 117 and lysine 121 each carry N6-succinyllysine; alternate. The residue at position 117 (lysine 117) is an N6-malonyllysine; alternate. The residue at position 117 (lysine 117) is an N6-methylated lysine; alternate. Residue lysine 121 forms a Glycyl lysine isopeptide (Lys-Gly) (interchain with G-Cter in ubiquitin); alternate linkage.

Belongs to the histone H2B family. As to quaternary structure, the nucleosome is a histone octamer containing two molecules each of H2A, H2B, H3 and H4 assembled in one H3-H4 heterotetramer and two H2A-H2B heterodimers. The octamer wraps approximately 147 bp of DNA. Post-translationally, monoubiquitination at Lys-35 (H2BK34Ub) by the MSL1/MSL2 dimer is required for histone H3 'Lys-4' (H3K4me) and 'Lys-79' (H3K79me) methylation and transcription activation at specific gene loci, such as HOXA9 and MEIS1 loci. Similarly, monoubiquitination at Lys-121 (H2BK120Ub) by the RNF20/40 complex gives a specific tag for epigenetic transcriptional activation and is also prerequisite for histone H3 'Lys-4' and 'Lys-79' methylation. It also functions cooperatively with the FACT dimer to stimulate elongation by RNA polymerase II. H2BK120Ub also acts as a regulator of mRNA splicing: deubiquitination by USP49 is required for efficient cotranscriptional splicing of a large set of exons. Phosphorylation at Ser-37 (H2BS36ph) by AMPK in response to stress promotes transcription. Phosphorylated on Ser-15 (H2BS14ph) by STK4/MST1 during apoptosis; which facilitates apoptotic chromatin condensation. Also phosphorylated on Ser-15 in response to DNA double strand breaks (DSBs), and in correlation with somatic hypermutation and immunoglobulin class-switch recombination. In terms of processing, glcNAcylation at Ser-113 promotes monoubiquitination of Lys-121. It fluctuates in response to extracellular glucose, and associates with transcribed genes. Post-translationally, ADP-ribosylated by PARP1 or PARP2 on Ser-7 (H2BS6ADPr) in response to DNA damage. H2BS6ADPr promotes recruitment of CHD1L. Poly ADP-ribosylation on Glu-36 (H2BE35ADPr) by PARP1 regulates adipogenesis: it inhibits phosphorylation at Ser-37 (H2BS36ph), thereby blocking expression of pro-adipogenetic genes. Crotonylation (Kcr) is specifically present in male germ cells and marks testis-specific genes in post-meiotic cells, including X-linked genes that escape sex chromosome inactivation in haploid cells. Crotonylation marks active promoters and enhancers and confers resistance to transcriptional repressors. It is also associated with post-meiotically activated genes on autosomes. In terms of processing, lactylated in macrophages by EP300/P300 by using lactoyl-CoA directly derived from endogenous or exogenous lactate, leading to stimulates gene transcription.

The protein localises to the nucleus. Its subcellular location is the chromosome. Its function is as follows. Core component of nucleosome. Nucleosomes wrap and compact DNA into chromatin, limiting DNA accessibility to the cellular machineries which require DNA as a template. Histones thereby play a central role in transcription regulation, DNA repair, DNA replication and chromosomal stability. DNA accessibility is regulated via a complex set of post-translational modifications of histones, also called histone code, and nucleosome remodeling. The polypeptide is Histone H2B type 3-B (Homo sapiens (Human)).